The sequence spans 180 residues: Cell division protein SepF (180 aa).

Residues 21–40 form a disordered region; that stretch reads LDDDYDDGRAVGRDDRRAMH. Residues 27 to 40 show a composition bias toward basic and acidic residues; the sequence is DGRAVGRDDRRAMH.

The protein belongs to the SepF family. In terms of assembly, homodimer. Interacts with FtsZ.

The protein localises to the cytoplasm. Functionally, cell division protein that is part of the divisome complex and is recruited early to the Z-ring. Probably stimulates Z-ring formation, perhaps through the cross-linking of FtsZ protofilaments. Its function overlaps with FtsA. In Frankia casuarinae (strain DSM 45818 / CECT 9043 / HFP020203 / CcI3), this protein is Cell division protein SepF.